The primary structure comprises 603 residues: Arginine--tRNA ligase (603 aa).

The short motif at 143 to 153 is the 'HIGH' region element; the sequence is PNIAKEMHVGH.

It belongs to the class-I aminoacyl-tRNA synthetase family. In terms of assembly, monomer.

Its subcellular location is the cytoplasm. It carries out the reaction tRNA(Arg) + L-arginine + ATP = L-arginyl-tRNA(Arg) + AMP + diphosphate. This is Arginine--tRNA ligase from Prochlorococcus marinus (strain MIT 9303).